Here is a 150-residue protein sequence, read N- to C-terminus: Nascent polypeptide-associated complex subunit beta (150 aa).

Disordered regions lie at residues 1-45 and 123-150; these read MADV…LQQS and YQNM…NKVE. Over residues 23–32 the composition is skewed to basic residues; it reads TPRRKVKRAP. One can recognise an NAC-A/B domain in the interval 36–101; it reads GADDKKLQQS…GEDKELTELV (66 aa).

The protein belongs to the NAC-beta family. Part of the nascent polypeptide-associated complex (NAC), consisting of EGD2 and EGD1. NAC associates with ribosomes via EGD1.

The protein resides in the cytoplasm. It is found in the nucleus. Its function is as follows. Component of the nascent polypeptide-associated complex (NAC), a dynamic component of the ribosomal exit tunnel, protecting the emerging polypeptides from interaction with other cytoplasmic proteins to ensure appropriate nascent protein targeting. The NAC complex also promotes mitochondrial protein import by enhancing productive ribosome interactions with the outer mitochondrial membrane and blocks the inappropriate interaction of ribosomes translating non-secretory nascent polypeptides with translocation sites in the membrane of the endoplasmic reticulum. EGD1 may act as a transcription factor that exert a negative effect on the expression of several genes that are transcribed by RNA polymerase II. This is Nascent polypeptide-associated complex subunit beta (EGD1) from Chaetomium globosum (strain ATCC 6205 / CBS 148.51 / DSM 1962 / NBRC 6347 / NRRL 1970) (Soil fungus).